Reading from the N-terminus, the 552-residue chain is Asparagine--tRNA ligase, cytoplasmic (552 aa).

Positions 1-23 (MSQVYVNEKTGADSTDVSGSEQQ) are disordered. A compositionally biased stretch (polar residues) spans 12 to 23 (ADSTDVSGSEQQ).

Belongs to the class-II aminoacyl-tRNA synthetase family.

It localises to the cytoplasm. It catalyses the reaction tRNA(Asn) + L-asparagine + ATP = L-asparaginyl-tRNA(Asn) + AMP + diphosphate + H(+). This is Asparagine--tRNA ligase, cytoplasmic (DED81) from Debaryomyces hansenii (strain ATCC 36239 / CBS 767 / BCRC 21394 / JCM 1990 / NBRC 0083 / IGC 2968) (Yeast).